A 499-amino-acid chain; its full sequence is Uridine-cytidine kinase A (499 aa).

The interval 1–44 (MSDNSTTKVTTNDSPSLTTTTSTTTAPTTTTTTTTTPTHNHDTT) is disordered. Over residues 10 to 38 (TTNDSPSLTTTTSTTTAPTTTTTTTTTPT) the composition is skewed to low complexity. 78–85 (GGSASGKT) provides a ligand contact to ATP.

This sequence belongs to the uridine kinase family.

It carries out the reaction uridine + ATP = UMP + ADP + H(+). The catalysed reaction is cytidine + ATP = CMP + ADP + H(+). The protein operates within pyrimidine metabolism; CTP biosynthesis via salvage pathway; CTP from cytidine: step 1/3. It functions in the pathway pyrimidine metabolism; UMP biosynthesis via salvage pathway; UMP from uridine: step 1/1. In terms of biological role, catalyzes the conversion of uridine into uridine monophosphate and cytidine into cytidine monophosphate in the pyrimidine salvage pathway. In Dictyostelium discoideum (Social amoeba), this protein is Uridine-cytidine kinase A (udkA).